Here is a 243-residue protein sequence, read N- to C-terminus: Urease accessory protein UreF 2 (243 aa).

This sequence belongs to the UreF family. UreD, UreF and UreG form a complex that acts as a GTP-hydrolysis-dependent molecular chaperone, activating the urease apoprotein by helping to assemble the nickel containing metallocenter of UreC. The UreE protein probably delivers the nickel.

It localises to the cytoplasm. Required for maturation of urease via the functional incorporation of the urease nickel metallocenter. In terms of biological role, disrupting the ure2 operon has no effect on urease activity or pathogen survival in BALB/c mice when administered orally. The chain is Urease accessory protein UreF 2 from Brucella abortus (strain 2308).